The primary structure comprises 271 residues: Ribosomal RNA small subunit methyltransferase A (271 aa).

S-adenosyl-L-methionine-binding residues include histidine 11, leucine 13, glycine 38, glutamate 58, aspartate 86, and asparagine 101.

It belongs to the class I-like SAM-binding methyltransferase superfamily. rRNA adenine N(6)-methyltransferase family. RsmA subfamily.

The protein resides in the cytoplasm. It carries out the reaction adenosine(1518)/adenosine(1519) in 16S rRNA + 4 S-adenosyl-L-methionine = N(6)-dimethyladenosine(1518)/N(6)-dimethyladenosine(1519) in 16S rRNA + 4 S-adenosyl-L-homocysteine + 4 H(+). Specifically dimethylates two adjacent adenosines (A1518 and A1519) in the loop of a conserved hairpin near the 3'-end of 16S rRNA in the 30S particle. May play a critical role in biogenesis of 30S subunits. The sequence is that of Ribosomal RNA small subunit methyltransferase A from Helicobacter pylori (strain HPAG1).